Consider the following 121-residue polypeptide: Small ribosomal subunit protein uS11 (121 aa).

This sequence belongs to the universal ribosomal protein uS11 family. Part of the 30S ribosomal subunit. Interacts with proteins S7 and S18. Binds to IF-3.

Its function is as follows. Located on the platform of the 30S subunit, it bridges several disparate RNA helices of the 16S rRNA. Forms part of the Shine-Dalgarno cleft in the 70S ribosome. This is Small ribosomal subunit protein uS11 from Ureaplasma parvum serovar 3 (strain ATCC 27815 / 27 / NCTC 11736).